The following is a 176-amino-acid chain: PKHD-type hydroxylase Mfla_0096 (176 aa).

In terms of domain architecture, Fe2OG dioxygenase spans 78–147 (KVFPPLFNRY…NQIARGTYGA (70 aa)).

Requires Fe(2+) as cofactor. L-ascorbate serves as cofactor.

This chain is PKHD-type hydroxylase Mfla_0096, found in Methylobacillus flagellatus (strain ATCC 51484 / DSM 6875 / VKM B-1610 / KT).